Here is a 217-residue protein sequence, read N- to C-terminus: Thiamine-phosphate synthase (217 aa).

Residues 39–43 (QLRRK) and N71 contribute to the 4-amino-2-methyl-5-(diphosphooxymethyl)pyrimidine site. Mg(2+) contacts are provided by D72 and D91. S110 is a 4-amino-2-methyl-5-(diphosphooxymethyl)pyrimidine binding site. 137–139 (SPT) contacts 2-[(2R,5Z)-2-carboxy-4-methylthiazol-5(2H)-ylidene]ethyl phosphate. K140 serves as a coordination point for 4-amino-2-methyl-5-(diphosphooxymethyl)pyrimidine. 2-[(2R,5Z)-2-carboxy-4-methylthiazol-5(2H)-ylidene]ethyl phosphate-binding positions include G173 and 193 to 194 (IS).

The protein belongs to the thiamine-phosphate synthase family. It depends on Mg(2+) as a cofactor.

The enzyme catalyses 2-[(2R,5Z)-2-carboxy-4-methylthiazol-5(2H)-ylidene]ethyl phosphate + 4-amino-2-methyl-5-(diphosphooxymethyl)pyrimidine + 2 H(+) = thiamine phosphate + CO2 + diphosphate. The catalysed reaction is 2-(2-carboxy-4-methylthiazol-5-yl)ethyl phosphate + 4-amino-2-methyl-5-(diphosphooxymethyl)pyrimidine + 2 H(+) = thiamine phosphate + CO2 + diphosphate. It catalyses the reaction 4-methyl-5-(2-phosphooxyethyl)-thiazole + 4-amino-2-methyl-5-(diphosphooxymethyl)pyrimidine + H(+) = thiamine phosphate + diphosphate. Its pathway is cofactor biosynthesis; thiamine diphosphate biosynthesis; thiamine phosphate from 4-amino-2-methyl-5-diphosphomethylpyrimidine and 4-methyl-5-(2-phosphoethyl)-thiazole: step 1/1. In terms of biological role, condenses 4-methyl-5-(beta-hydroxyethyl)thiazole monophosphate (THZ-P) and 2-methyl-4-amino-5-hydroxymethyl pyrimidine pyrophosphate (HMP-PP) to form thiamine monophosphate (TMP). This Bordetella parapertussis (strain 12822 / ATCC BAA-587 / NCTC 13253) protein is Thiamine-phosphate synthase.